A 301-amino-acid polypeptide reads, in one-letter code: Dihydroorotate dehydrogenase B (NAD(+)), catalytic subunit (301 aa).

Substrate-binding positions include Lys44, 68-72, and Asn122; that span reads NAMGL. Residue 44–45 participates in FMN binding; the sequence is KS. FMN is bound at residue Asn122. The active-site Nucleophile is the Cys125. Residues Lys160 and Ile186 each coordinate FMN. 187–188 provides a ligand contact to substrate; sequence NT. Residues Gly212, 238-239, and 260-261 contribute to the FMN site; these read GG and GS.

Belongs to the dihydroorotate dehydrogenase family. Type 1 subfamily. In terms of assembly, heterotetramer of 2 PyrK and 2 PyrD type B subunits. FMN serves as cofactor.

It localises to the cytoplasm. The catalysed reaction is (S)-dihydroorotate + NAD(+) = orotate + NADH + H(+). The protein operates within pyrimidine metabolism; UMP biosynthesis via de novo pathway; orotate from (S)-dihydroorotate (NAD(+) route): step 1/1. In terms of biological role, catalyzes the conversion of dihydroorotate to orotate with NAD(+) as electron acceptor. The polypeptide is Dihydroorotate dehydrogenase B (NAD(+)), catalytic subunit (pyrD) (Methanocella arvoryzae (strain DSM 22066 / NBRC 105507 / MRE50)).